The primary structure comprises 229 residues: GTP cyclohydrolase 1 (229 aa).

Residues 1 to 21 (MDAKIKPLRAGKSADARTDFQ) form a disordered region. Zn(2+) contacts are provided by C118, H121, and C189.

This sequence belongs to the GTP cyclohydrolase I family. As to quaternary structure, toroid-shaped homodecamer, composed of two pentamers of five dimers.

The catalysed reaction is GTP + H2O = 7,8-dihydroneopterin 3'-triphosphate + formate + H(+). It functions in the pathway cofactor biosynthesis; 7,8-dihydroneopterin triphosphate biosynthesis; 7,8-dihydroneopterin triphosphate from GTP: step 1/1. This is GTP cyclohydrolase 1 from Rhodopseudomonas palustris (strain HaA2).